The primary structure comprises 153 residues: Nucleoside diphosphate kinase (153 aa).

K11, F59, R87, T93, R104, and N114 together coordinate ATP. H117 (pros-phosphohistidine intermediate) is an active-site residue.

Belongs to the NDK family. The cofactor is Mg(2+).

The enzyme catalyses a 2'-deoxyribonucleoside 5'-diphosphate + ATP = a 2'-deoxyribonucleoside 5'-triphosphate + ADP. It catalyses the reaction a ribonucleoside 5'-diphosphate + ATP = a ribonucleoside 5'-triphosphate + ADP. Major role in the synthesis of nucleoside triphosphates other than ATP. The ATP gamma phosphate is transferred to the NDP beta phosphate via a ping-pong mechanism, using a phosphorylated active-site intermediate. This Emericella nidulans (strain FGSC A4 / ATCC 38163 / CBS 112.46 / NRRL 194 / M139) (Aspergillus nidulans) protein is Nucleoside diphosphate kinase (swoH).